The chain runs to 516 residues: MAATNIWAALPAKKRPLHQRARRPAGGRGREPEVPFTTDPSGNPAGRNCLEFLPPGGTSGCSATDGGATVPLALRPFLRERRPLGSQHPCPWHYLQVSDYDDSLAPTCFRAHLHRRGSSSTLNQASAMTDPNPRTAEASGLYTYSSRPRAVACQRRRHRDSILQPVEEPMSYGNIMYDRRVIRGNTYALPTGQVPGQPDPLELQRQQQARRRALARKRAQEQLKPRTPEPVEGRKHVDIQTELYLEEIADRIVEVDMECQTDAFLDRPPTPLFIPAKTGKDVATQILGGELFDFDLEVKPMLEVLVGKTIEQSLLEVMEEEELANLRARQYAYEEIRNVELAEVQRLEEQERRHREEKERRKKQQWEIVHKRNETLQKISALIFARQYLANLLPSVFDKLRNSGFFYDPIERDIEVGFLPWLMNEVEKSMEHSMVGRTVLDMLIRDVVERRINDYEHKEAMPPGQKTNVINGPNTVTDPSVTTLHTQKPVLDRVSSQPAPSQERKPVEEGGHLMAE.

Disordered stretches follow at residues 1–45 (MAAT…GNPA), 120–139 (STLN…AEAS), and 190–233 (PTGQ…PVEG). Basic residues predominate over residues 12-25 (AKKRPLHQRARRPA). Positions 120 to 129 (STLNQASAMT) are enriched in polar residues. The segment covering 208–217 (QARRRALARK) has biased composition (basic residues). Basic and acidic residues predominate over residues 218-233 (RAQEQLKPRTPEPVEG). Residue Thr-270 is modified to Phosphothreonine; by MAPK1. Residues 333 to 369 (YEEIRNVELAEVQRLEEQERRHREEKERRKKQQWEIV) are a coiled coil. The segment at 459-516 (EAMPPGQKTNVINGPNTVTDPSVTTLHTQKPVLDRVSSQPAPSQERKPVEEGGHLMAE) is disordered. Residues 465-486 (QKTNVINGPNTVTDPSVTTLHT) show a composition bias toward polar residues. Over residues 502-516 (QERKPVEEGGHLMAE) the composition is skewed to basic and acidic residues.

Belongs to the flagellar radial spoke RSP3 family. As to quaternary structure, may be a component of axonemal radial spokes. Interacts with IQUB. Interacts with phosphorylated MAPK1. Interacts with MEK1. Interacts with PKA regulatory subunits PRKAR1A and PRKAR1B. Interacts with RSPH1. Interacts with RSPH4A. Interacts with RSPH6A. Interacts with RSPH9. Interacts with CFAP61. Interacts with LRRC23.

The protein localises to the cytoplasm. It localises to the cytoskeleton. The protein resides in the cilium axoneme. It is found in the flagellum axoneme. May function as part of axonemal radial spoke complexes that play an important part in the motility of sperm and cilia. Functions as a protein kinase A-anchoring protein that scaffolds the cAMP-dependent protein kinase holoenzyme. May serve as a point of convergence for MAPK and PKA signaling in cilia. In Mus musculus (Mouse), this protein is Radial spoke head protein 3 homolog A (Rsph3a).